The chain runs to 344 residues: Nuclear distribution protein nudE-like 1-A (344 aa).

Residues 26 to 187 (YKKSYKEAQE…RQELAVRDTR (162 aa)) adopt a coiled-coil conformation. Residues 181-190 (LAVRDTRSEV) show a composition bias toward basic and acidic residues. Disordered regions lie at residues 181-209 (LAVR…TDSA) and 322-344 (PGDG…VLSV).

The protein belongs to the nudE family. Post-translationally, phosphorylated in mitosis.

It localises to the cytoplasm. The protein resides in the cytoskeleton. It is found in the microtubule organizing center. Its subcellular location is the centrosome. The protein localises to the spindle. Its function is as follows. Required for organization of the cellular microtubule array and microtubule anchoring at the centrosome. Positively regulates the activity of the minus-end directed microtubule motor protein dynein. May enhance dynein-mediated microtubule sliding by targeting dynein to the microtubule plus end. This is Nuclear distribution protein nudE-like 1-A (ndel1a) from Danio rerio (Zebrafish).